A 147-amino-acid polypeptide reads, in one-letter code: Ribosome maturation factor RimP (147 aa).

It belongs to the RimP family.

It is found in the cytoplasm. Required for maturation of 30S ribosomal subunits. This Sulfurihydrogenibium azorense (strain DSM 15241 / OCM 825 / Az-Fu1) protein is Ribosome maturation factor RimP.